Reading from the N-terminus, the 337-residue chain is MKRIAVLTSGGDAPGMNAAVRAVVRKAISEGMEVCGINRGYAGMVEGDIFPLDAKGVSNILSRGGTFLQSARYPEFAKLEGQLKGIEQLKKHGIEGVVVIGGDGSYHGAMRLTEHGFPAVGLPGTIDNDIVGTDYTIGFDTAVNTATDALDKIRDTSFSHGRTFVVEVMGRNAGDIALWSGIAAGADQIIIPEEPYDIKEVVANVKNGYLSKSKNHHLIVLAEGVMHGEEFAAQMKEAGDNSDLRVTNLGHILRGGAPTPRDRVIASWMGAHAVELLREGKGGLAIGIQNEELVEHPILGSAEDGALFSLTEQGEIVVNNPHKARLDFAALNRDLSN.

ATP is bound at residue G11. 21–25 is an ADP binding site; the sequence is RAVVR. Residues 72 to 73 and 102 to 105 contribute to the ATP site; these read RY and GDGS. Position 103 (D103) interacts with Mg(2+). 125-127 provides a ligand contact to substrate; the sequence is TID. Catalysis depends on D127, which acts as the Proton acceptor. R154 serves as a coordination point for ADP. Residues R162 and 169–171 contribute to the substrate site; that span reads MGR. Residues 185 to 187 and 214 to 216 each bind ADP; these read GAD and KNH. Residues E223, R245, and 251-254 each bind substrate; that span reads HILR.

It belongs to the phosphofructokinase type A (PFKA) family. ATP-dependent PFK group I subfamily. Prokaryotic clade 'B1' sub-subfamily. In terms of assembly, homotetramer. The cofactor is Mg(2+).

Its subcellular location is the cytoplasm. The catalysed reaction is beta-D-fructose 6-phosphate + ATP = beta-D-fructose 1,6-bisphosphate + ADP + H(+). The protein operates within carbohydrate degradation; glycolysis; D-glyceraldehyde 3-phosphate and glycerone phosphate from D-glucose: step 3/4. Its activity is regulated as follows. Allosterically activated by ADP and other diphosphonucleosides, and allosterically inhibited by phosphoenolpyruvate. In terms of biological role, catalyzes the phosphorylation of D-fructose 6-phosphate to fructose 1,6-bisphosphate by ATP, the first committing step of glycolysis. The chain is ATP-dependent 6-phosphofructokinase from Streptococcus mutans serotype c (strain ATCC 700610 / UA159).